Here is a 466-residue protein sequence, read N- to C-terminus: Phosphomethylpyrimidine synthase (466 aa).

Substrate contacts are provided by residues Asn-80, Met-109, Tyr-139, His-175, 195 to 197 (SRG), 236 to 239 (DSLR), and Glu-275. His-279 is a binding site for Zn(2+). Position 302 (Tyr-302) interacts with substrate. His-343 contacts Zn(2+). 3 residues coordinate [4Fe-4S] cluster: Cys-423, Cys-426, and Cys-431.

Belongs to the ThiC family. [4Fe-4S] cluster is required as a cofactor.

It carries out the reaction 5-amino-1-(5-phospho-beta-D-ribosyl)imidazole + S-adenosyl-L-methionine = 4-amino-2-methyl-5-(phosphooxymethyl)pyrimidine + CO + 5'-deoxyadenosine + formate + L-methionine + 3 H(+). It participates in cofactor biosynthesis; thiamine diphosphate biosynthesis. Catalyzes the synthesis of the hydroxymethylpyrimidine phosphate (HMP-P) moiety of thiamine from aminoimidazole ribotide (AIR) in a radical S-adenosyl-L-methionine (SAM)-dependent reaction. The sequence is that of Phosphomethylpyrimidine synthase from Synechococcus sp. (strain CC9902).